Here is a 146-residue protein sequence, read N- to C-terminus: Snaclec coagulation factor X-activating enzyme light chain 1 (146 aa).

The signal sequence occupies residues 1 to 23; that stretch reads MGRFISVSFGCLVVFLSLSGTEA. The cysteines at positions 27 and 38 are disulfide-linked. Positions 34-145 constitute a C-type lectin domain; the sequence is YEQHCYKGFN…CNFIAPVVCK (112 aa). Asn-47 carries an N-linked (GlcNAc...) (complex) asparagine glycan. Intrachain disulfides connect Cys-55/Cys-144 and Cys-121/Cys-136.

Belongs to the snaclec family. Heterotrimer; disulfide-linked. The heterotrimer consists of 1 heavy chain (a metalloproteinase) and 2 light chains: LC1 and LC2. In terms of processing, N-glycosylated; probably required for conformation. Removal of easily accessible sugars does not change its functional capacity, but removal of the core sugars with N-glycanase causes a virtually complete loss of enzyme activity, apparently as a result of major conformational changes in the molecule. Not O-glycosylated. Expressed by the venom gland.

It is found in the secreted. Regulatory subunit of the blood coagulation factor X- and IX-activating enzyme. The enzyme activates coagulation factor X (F10) by cleaving the Arg-Ile bond and is also able to activate coagulation factor IX (F9) and protein S (PROS1) by specific cleavage of Arg-Ile and Arg-Val bonds. May serve as an exosite by which the enzyme recognizes and binds to the Gla domain of factor X (F10) and factor IX (F9) in a calcium-dependent manner. The chain is Snaclec coagulation factor X-activating enzyme light chain 1 (LC1) from Daboia siamensis (Eastern Russel's viper).